Here is a 146-residue protein sequence, read N- to C-terminus: 3-hydroxyacyl-[acyl-carrier-protein] dehydratase FabZ (146 aa).

His-48 is a catalytic residue.

Belongs to the thioester dehydratase family. FabZ subfamily.

It is found in the cytoplasm. The catalysed reaction is a (3R)-hydroxyacyl-[ACP] = a (2E)-enoyl-[ACP] + H2O. Functionally, involved in unsaturated fatty acids biosynthesis. Catalyzes the dehydration of short chain beta-hydroxyacyl-ACPs and long chain saturated and unsaturated beta-hydroxyacyl-ACPs. The protein is 3-hydroxyacyl-[acyl-carrier-protein] dehydratase FabZ of Paracidovorax citrulli (strain AAC00-1) (Acidovorax citrulli).